A 57-amino-acid polypeptide reads, in one-letter code: Large ribosomal subunit protein bL33 (57 aa).

The protein belongs to the bacterial ribosomal protein bL33 family.

This Shewanella amazonensis (strain ATCC BAA-1098 / SB2B) protein is Large ribosomal subunit protein bL33.